Consider the following 405-residue polypeptide: Serpin B12 (405 aa).

Positions 64–83 are disordered; sequence SQNESKEPDPCLKSNKQKAG.

This sequence belongs to the serpin family. Ov-serpin subfamily. In terms of assembly, interacts with SLFN12; as part of a pathway regulating cell differentiation. May interact with USP14. Expressed in many tissues, including brain, bone marrow, lymph node, heart, lung, liver, pancreas, testis, ovary, and intestine.

Its subcellular location is the cytoplasm. Functionally, inhibits trypsin and plasmin, but not thrombin, coagulation factor Xa, or urokinase-type plasminogen activator. May play a role in cell differentiation. The polypeptide is Serpin B12 (SERPINB12) (Homo sapiens (Human)).